The chain runs to 868 residues: Leucine--tRNA ligase (868 aa).

The 'HIGH' region motif lies at 42–52 (PYPSGKLHMGH). Residues 627 to 631 (KMAKS) carry the 'KMSKS' region motif. Lys630 contributes to the ATP binding site.

This sequence belongs to the class-I aminoacyl-tRNA synthetase family.

It localises to the cytoplasm. The catalysed reaction is tRNA(Leu) + L-leucine + ATP = L-leucyl-tRNA(Leu) + AMP + diphosphate. The sequence is that of Leucine--tRNA ligase from Pseudomonas fluorescens (strain Pf0-1).